Here is a 511-residue protein sequence, read N- to C-terminus: Ribonuclease E/G-like protein (511 aa).

The S1 motif domain occupies 35–117 (SDIYLGTVDK…LTANITLSGR (83 aa)). Mg(2+)-binding residues include Asp-296 and Asp-339.

This sequence belongs to the RNase E/G family. It depends on Mg(2+) as a cofactor.

Its subcellular location is the plastid. The protein resides in the chloroplast stroma. Its function is as follows. Involved in intercistronic processing of primary transcripts from chloroplast operons. The endonucleolytic activity of the enzyme depends on the number of phosphates at the 5' end, is inhibited by structured RNA, and preferentially cleaves A/U-rich sequences. In Porphyra purpurea (Red seaweed), this protein is Ribonuclease E/G-like protein (rne).